The following is a 294-amino-acid chain: G-protein coupled receptor homolog U51 (294 aa).

Topologically, residues 1 to 14 (MKNIDLTNWKLLAE) are extracellular. The chain crosses the membrane as a helical span at residues 15–35 (IYEYLFFFSFFFLCLLVIIVV). Residues 36–47 (KFNNSTVGREYT) lie on the Cytoplasmic side of the membrane. A helical membrane pass occupies residues 48–68 (FSTFSGMLVYILLLPVKMGML). The Extracellular portion of the chain corresponds to 69–79 (TKMWDVSTDYC). Residues 80–102 (IILMFLSDFSFIFSSWALTLLAL) form a helical membrane-spanning segment. The Cytoplasmic segment spans residues 103–119 (ERINNFSFSEIKVNETK). The helical transmembrane segment at 120–140 (ILKQMSFPIIWVTSIFQAVQI) threads the bilayer. Over 141-166 (SMKYKKSQMNLEDDYCLLAIERSAEE) the chain is Extracellular. The chain crosses the membrane as a helical span at residues 167–187 (AWILLMYTVVIPTFIVFFYVL). At 188–200 (NKRFLFLERDLNS) the chain is on the cytoplasmic side. The chain crosses the membrane as a helical span at residues 201–221 (IVTHLSLFLFFGALCFFPASV). Residues 222–236 (LNEFNCNRLFYGLHE) lie on the Extracellular side of the membrane. A helical transmembrane segment spans residues 237 to 257 (LLIVCLELKIFYVPTMTYIIS). The Cytoplasmic portion of the chain corresponds to 258–294 (CENYRLAAKAFFCKCFKPCFLMPSLRKLQQPTKSTQF).

This sequence belongs to the G-protein coupled receptor 1 family.

The protein resides in the host cell membrane. This is G-protein coupled receptor homolog U51 (U51) from Human herpesvirus 7 (strain JI) (HHV-7).